Here is a 170-residue protein sequence, read N- to C-terminus: RNA pyrophosphohydrolase (170 aa).

Residues glycine 6 to lysine 149 form the Nudix hydrolase domain. Positions glycine 39–glycine 60 match the Nudix box motif.

It belongs to the Nudix hydrolase family. RppH subfamily. A divalent metal cation is required as a cofactor.

Accelerates the degradation of transcripts by removing pyrophosphate from the 5'-end of triphosphorylated RNA, leading to a more labile monophosphorylated state that can stimulate subsequent ribonuclease cleavage. In Saccharophagus degradans (strain 2-40 / ATCC 43961 / DSM 17024), this protein is RNA pyrophosphohydrolase.